A 178-amino-acid chain; its full sequence is Large ribosomal subunit protein uL10 (178 aa).

The protein belongs to the universal ribosomal protein uL10 family. In terms of assembly, part of the ribosomal stalk of the 50S ribosomal subunit. The N-terminus interacts with L11 and the large rRNA to form the base of the stalk. The C-terminus forms an elongated spine to which L12 dimers bind in a sequential fashion forming a multimeric L10(L12)X complex.

Functionally, forms part of the ribosomal stalk, playing a central role in the interaction of the ribosome with GTP-bound translation factors. In Mycobacterium tuberculosis (strain ATCC 25177 / H37Ra), this protein is Large ribosomal subunit protein uL10.